The sequence spans 265 residues: uncharacterized protein (265 aa).

Positions 1-23 (MNYFRILYCSVLLFFSFFSCTSA) are cleaved as a signal peptide. Residues 67–248 (KEIYLTFDNG…TLKQQGYTFK (182 aa)) form the NodB homology domain.

This sequence belongs to the polysaccharide deacetylase family.

This is an uncharacterized protein from Geobacillus stearothermophilus (Bacillus stearothermophilus).